The sequence spans 148 residues: D-aminoacyl-tRNA deacylase (148 aa).

Positions 137 to 138 (GP) match the Gly-cisPro motif, important for rejection of L-amino acids motif.

This sequence belongs to the DTD family. Homodimer.

Its subcellular location is the cytoplasm. It carries out the reaction glycyl-tRNA(Ala) + H2O = tRNA(Ala) + glycine + H(+). It catalyses the reaction a D-aminoacyl-tRNA + H2O = a tRNA + a D-alpha-amino acid + H(+). In terms of biological role, an aminoacyl-tRNA editing enzyme that deacylates mischarged D-aminoacyl-tRNAs. Also deacylates mischarged glycyl-tRNA(Ala), protecting cells against glycine mischarging by AlaRS. Acts via tRNA-based rather than protein-based catalysis; rejects L-amino acids rather than detecting D-amino acids in the active site. By recycling D-aminoacyl-tRNA to D-amino acids and free tRNA molecules, this enzyme counteracts the toxicity associated with the formation of D-aminoacyl-tRNA entities in vivo and helps enforce protein L-homochirality. This is D-aminoacyl-tRNA deacylase from Oenococcus oeni (strain ATCC BAA-331 / PSU-1).